The chain runs to 602 residues: Leucine-rich repeat-containing protein 40 (602 aa).

The interval 1-22 (MSRLKRIAGQDPRAGFKEGGRD) is disordered. The residue at position 71 (Ser71) is a Phosphoserine. LRR repeat units follow at residues 83-104 (DLTKLIISNNKLQSLTDDLRLL), 106-127 (ALTVLDIHDNQLTSLPSAIREL), 129-150 (NLQKLNVSHNKLKILPEEITNL), 152-173 (NLKCLYLQHNELTCISEGFEQF), 175-196 (NLEDLDLSNNRLTTVPASFSSL), 198-219 (SLVRLNLSSNELKSLPAEINRM), 221-242 (RLKHLDCNSNLLETIPPELAGM), 244-265 (SLELLYLRRNKLRFLPEFPSCS), 266-286 (LLKELHVGENQIEMLEAEHLK), 290-311 (SILVLDLRDNKLKSVPDEIILL), 313-335 (SLERLDLSNNDISSLPYSLGNLH), 336-356 (LKFLALEGNPLRTIRREIINK), 400-421 (TLKILDYSDKQATLIPDEVFDA), 426-447 (IITSINFSKNQLCEIPKRMVEL), 450-472 (MVSDVNLSFNKLSFISLELCVLQ), 473-494 (KLTFLDLRNNFLNSLPEEVESL), 496-517 (RLQTINLSFNRFKMLPEVLYRI), 519-540 (TLETILISNNQVGSVDPQKMKM), 543-564 (NLTTLDLQNNDLLQIPPELGNC), and 566-586 (NLRTLLLDGNPFRVPRAAILM).

This Pongo abelii (Sumatran orangutan) protein is Leucine-rich repeat-containing protein 40 (LRRC40).